The following is a 910-amino-acid chain: NADH-quinone oxidoreductase subunit G (910 aa).

Positions 1-83 constitute a 2Fe-2S ferredoxin-type domain; it reads MAKIYVDGKA…GTIISINDDT (83 aa). [2Fe-2S] cluster-binding residues include C34, C45, C48, and C67. Positions 83-122 constitute a 4Fe-4S His(Cys)3-ligated-type domain; that stretch reads TSKKFRSNIVELLLTNHPHDCPVCEEGGNCHLQDMTVMTT. [4Fe-4S] cluster is bound by residues H99, C103, C106, C112, C151, C154, C157, C201, C228, C231, C235, and C263. Positions 221 to 277 constitute a 4Fe-4S Mo/W bis-MGD-type domain; sequence MQYAPGICQNCSIGCNISIGERYGEIRRIENRYHESINHYLICDLGRFGYSHTNLKN.

It belongs to the complex I 75 kDa subunit family. As to quaternary structure, composed of 13 different subunits. Subunits NuoCD, E, F, and G constitute the peripheral sector of the complex. Requires [2Fe-2S] cluster as cofactor. [4Fe-4S] cluster is required as a cofactor.

It carries out the reaction a quinone + NADH + 5 H(+)(in) = a quinol + NAD(+) + 4 H(+)(out). Functionally, NDH-1 shuttles electrons from NADH, via FMN and iron-sulfur (Fe-S) centers, to quinones in the respiratory chain. Couples the redox reaction to proton translocation (for every two electrons transferred, four hydrogen ions are translocated across the cytoplasmic membrane), and thus conserves the redox energy in a proton gradient. The sequence is that of NADH-quinone oxidoreductase subunit G (nuoG) from Buchnera aphidicola subsp. Schizaphis graminum (strain Sg).